A 132-amino-acid polypeptide reads, in one-letter code: MDTMNWLDQVKWDAQGLVPVIAQEAATGDVLMFAWMNREALAKTAELGRAVYYSRSRGKLWFKGEESGHVQQVHDIRLDCDSDVVLLKVTQLGHEPGIACHTGRHSCFFNALQNGAWQAVDPVLKDPESIYK.

Mg(2+) is bound at residue D79. C80 provides a ligand contact to Zn(2+). Mg(2+) is bound by residues D81 and D83. Zn(2+) contacts are provided by C100 and C107.

Belongs to the PRA-CH family. As to quaternary structure, homodimer. Mg(2+) serves as cofactor. It depends on Zn(2+) as a cofactor.

It is found in the cytoplasm. It catalyses the reaction 1-(5-phospho-beta-D-ribosyl)-5'-AMP + H2O = 1-(5-phospho-beta-D-ribosyl)-5-[(5-phospho-beta-D-ribosylamino)methylideneamino]imidazole-4-carboxamide. It participates in amino-acid biosynthesis; L-histidine biosynthesis; L-histidine from 5-phospho-alpha-D-ribose 1-diphosphate: step 3/9. In terms of biological role, catalyzes the hydrolysis of the adenine ring of phosphoribosyl-AMP. In Acidovorax sp. (strain JS42), this protein is Phosphoribosyl-AMP cyclohydrolase.